A 356-amino-acid polypeptide reads, in one-letter code: Tail sheath protein (356 aa).

This sequence belongs to the myoviridae tail sheath protein family. As to quaternary structure, homomultimer.

Its subcellular location is the virion. The protein resides in the host cytoplasm. Polymerizes as an extended structure around the baseplate-tail tube complex. During ejection, the sheath shifts to a contracted form, thereby making the inner tail tube protrude through the host cell envelope. This chain is Tail sheath protein, found in Clostridioides difficile (Peptoclostridium difficile).